The chain runs to 128 residues: Small ribosomal subunit protein uS11 (128 aa).

It belongs to the universal ribosomal protein uS11 family. As to quaternary structure, part of the 30S ribosomal subunit. Interacts with proteins S7 and S18. Binds to IF-3.

In terms of biological role, located on the platform of the 30S subunit, it bridges several disparate RNA helices of the 16S rRNA. Forms part of the Shine-Dalgarno cleft in the 70S ribosome. The chain is Small ribosomal subunit protein uS11 from Wolbachia pipientis wMel.